The chain runs to 171 residues: MPLLDSFTVDHTRMEAPAVRVAKKMNTPHGDEITVFDLRFCVPNQEVMPERGIHTLEHLFAGFMRDHLNGNGVEIIDISPMGCRTGFYMSLIGTPDEQRVADAWKAAMADVLKVKDQNQIPELNVYQCGTYTMHSLEEAQDIARHIIERDVRINSNDELALPKEKLQELHI.

The Fe cation site is built by H54, H58, and C128.

This sequence belongs to the LuxS family. Homodimer. The cofactor is Fe cation.

The enzyme catalyses S-(5-deoxy-D-ribos-5-yl)-L-homocysteine = (S)-4,5-dihydroxypentane-2,3-dione + L-homocysteine. Its function is as follows. Involved in the synthesis of autoinducer 2 (AI-2) which is secreted by bacteria and is used to communicate both the cell density and the metabolic potential of the environment. The regulation of gene expression in response to changes in cell density is called quorum sensing. Catalyzes the transformation of S-ribosylhomocysteine (RHC) to homocysteine (HC) and 4,5-dihydroxy-2,3-pentadione (DPD). The chain is S-ribosylhomocysteine lyase from Klebsiella pneumoniae (strain 342).